A 266-amino-acid polypeptide reads, in one-letter code: MTLLFVGRGNANVCYLLSGEVYRISLRHQKLSRNNAYVQDNFQFIDSKIRSLPMLADVVVSMRLEEVFVDTKWINVLKDENILIDDSHMQCIVMPLLHAKDSTCEQLDHFNQIYRCSLNDAITWEFKPKWLYQSSDYCRNCTHNSLKGRDIEYCFLHDPELIIETLFAGRQVPEEFLDDILQYLQSSDSITQRLYAAQRFVKDDLSTLMTLRDVTCFLTWSRNTRSVKATIIDVDQKPANKLRHWQSTESALASFPGKKKAHFNHQ.

An EXKPK motif motif is present at residues E125–K129.

This sequence belongs to the IPK1 type 1 family.

The protein localises to the nucleus. The enzyme catalyses 1D-myo-inositol 1,3,4,5,6-pentakisphosphate + ATP = 1D-myo-inositol hexakisphosphate + ADP + H(+). Has kinase activity and phosphorylates inositol-1,3,4,5,6-pentakisphosphate (Ins(1,3,4,5,6)P5) to produce 1,2,3,4,5,6-hexakisphosphate (InsP6), also known as phytate. The chain is Inositol-pentakisphosphate 2-kinase (IPK1) from Kluyveromyces lactis (strain ATCC 8585 / CBS 2359 / DSM 70799 / NBRC 1267 / NRRL Y-1140 / WM37) (Yeast).